Consider the following 156-residue polypeptide: Ribosomal RNA large subunit methyltransferase H (156 aa).

Residues leucine 73, glycine 104, and 123 to 128 (LSPLTM) each bind S-adenosyl-L-methionine.

The protein belongs to the RNA methyltransferase RlmH family. In terms of assembly, homodimer.

The protein localises to the cytoplasm. It carries out the reaction pseudouridine(1915) in 23S rRNA + S-adenosyl-L-methionine = N(3)-methylpseudouridine(1915) in 23S rRNA + S-adenosyl-L-homocysteine + H(+). Its function is as follows. Specifically methylates the pseudouridine at position 1915 (m3Psi1915) in 23S rRNA. The polypeptide is Ribosomal RNA large subunit methyltransferase H (Proteus mirabilis (strain HI4320)).